Here is a 496-residue protein sequence, read N- to C-terminus: Glycogen synthase (496 aa).

Position 15 (Lys-15) interacts with ADP-alpha-D-glucose.

The protein belongs to the glycosyltransferase 1 family. Bacterial/plant glycogen synthase subfamily.

It carries out the reaction [(1-&gt;4)-alpha-D-glucosyl](n) + ADP-alpha-D-glucose = [(1-&gt;4)-alpha-D-glucosyl](n+1) + ADP + H(+). Its pathway is glycan biosynthesis; glycogen biosynthesis. Its function is as follows. Synthesizes alpha-1,4-glucan chains using ADP-glucose. The sequence is that of Glycogen synthase from Natranaerobius thermophilus (strain ATCC BAA-1301 / DSM 18059 / JW/NM-WN-LF).